A 63-amino-acid polypeptide reads, in one-letter code: Translational regulator CsrA (63 aa).

It belongs to the CsrA/RsmA family. In terms of assembly, homodimer; the beta-strands of each monomer intercalate to form a hydrophobic core, while the alpha-helices form wings that extend away from the core.

Its subcellular location is the cytoplasm. Functionally, a key translational regulator that binds mRNA to regulate translation initiation and/or mRNA stability. Mediates global changes in gene expression, shifting from rapid growth to stress survival by linking envelope stress, the stringent response and the catabolite repression systems. Usually binds in the 5'-UTR; binding at or near the Shine-Dalgarno sequence prevents ribosome-binding, repressing translation, binding elsewhere in the 5'-UTR can activate translation and/or stabilize the mRNA. Its function is antagonized by small RNA(s). The chain is Translational regulator CsrA from Alteromonas mediterranea (strain DSM 17117 / CIP 110805 / LMG 28347 / Deep ecotype).